The sequence spans 156 residues: MKIQLIAVGTKMPKWVEEGFQEYRRRFPHDMPLELIEITAGKRGKNADIARILQKEGEAMLAAIPKGNRIVTLDIPGKKWDTPELAQQLEAWKLDGRDVSILIGGPEGLAPACKAAAEQSWSLSALTLPHPLVRIVMAESLYRAWSITTNHPYHRE.

S-adenosyl-L-methionine contacts are provided by residues Leu73, Gly104, and 123-128 (LSALTL).

The protein belongs to the RNA methyltransferase RlmH family. Homodimer.

The protein localises to the cytoplasm. The catalysed reaction is pseudouridine(1915) in 23S rRNA + S-adenosyl-L-methionine = N(3)-methylpseudouridine(1915) in 23S rRNA + S-adenosyl-L-homocysteine + H(+). Its function is as follows. Specifically methylates the pseudouridine at position 1915 (m3Psi1915) in 23S rRNA. The chain is Ribosomal RNA large subunit methyltransferase H from Vibrio vulnificus (strain CMCP6).